Here is a 444-residue protein sequence, read N- to C-terminus: Tol-Pal system protein TolB (444 aa).

The first 19 residues, 1–19 (MRNIIYFILSLLFSVTSYA), serve as a signal peptide directing secretion.

Belongs to the TolB family. The Tol-Pal system is composed of five core proteins: the inner membrane proteins TolA, TolQ and TolR, the periplasmic protein TolB and the outer membrane protein Pal. They form a network linking the inner and outer membranes and the peptidoglycan layer.

It localises to the periplasm. In terms of biological role, part of the Tol-Pal system, which plays a role in outer membrane invagination during cell division and is important for maintaining outer membrane integrity. This chain is Tol-Pal system protein TolB, found in Rickettsia conorii (strain ATCC VR-613 / Malish 7).